Here is a 186-residue protein sequence, read N- to C-terminus: Negative modulator of initiation of replication (186 aa).

An interaction with DNA region spans residues 93–94 (AV).

The protein belongs to the SeqA family. Homodimer. Polymerizes to form helical filaments.

Its subcellular location is the cytoplasm. Negative regulator of replication initiation, which contributes to regulation of DNA replication and ensures that replication initiation occurs exactly once per chromosome per cell cycle. Binds to pairs of hemimethylated GATC sequences in the oriC region, thus preventing assembly of replication proteins and re-initiation at newly replicated origins. Repression is relieved when the region becomes fully methylated. The protein is Negative modulator of initiation of replication of Shewanella halifaxensis (strain HAW-EB4).